The chain runs to 875 residues: MTIERYNPRAQEQKWQAIWDEKKIFQTSHEDEGEKYYVLEMFPYPSGRIHMGHVRNYTMGDVVARYKRAKGMNVLHPMGWDAFGMPAENAAMQNKVHPKAWTYQNIAAMRKQLQKLGLSIDWSREFATCDVDYYHRQQMIFLDLYQKGLVVRKVAKVNWDPVDQTVLANEQVIDGRGWRSGALVEQRELTQWFFKITEFGEGLLARLDDLTEWPDKVRVMQKNWIGKSQGLYIRWALDKTQLPHNDGCEGFDEITCYSTRPDTLFGASFLALSVDHPVAQALARNDEELRAFIEMCRCGSTTTEALETAEKQGFRTGVLAVHPLNPAVRLPVYIANFVLMDYGTGAIFGCPAHDQRDLDFARKYDLPVQIVVAPKEAEEQDFTLSDTAYTGDGVMINSDFLNGLTPKDAFEVVAQHLEKQVLNGQPQGQKTVQFRLRDWGVSRQRYWGCPIPMIHCAACGVVPVPRADLPVVLPEDVTFDRPGNPLARHETWQTVACPSCGQPAKRETDTMDTFVDSSWYYARFTAPWAQEPTDQDIAAQWLPVQQYIGGIEHAILHLLYARFFMRAMKLAGHVNADEPFTGLFTQGMVVHETYRDAQGWVAPDEVSIVEQDGKRRAYKLTDQSEVTIGSIEKMSKSKKNVVDPDDIISSYGADTARWFMLSDSPPERDVIWSESGIEGAHRFVQRVWRCVALSAPILSTIEPCAGHQGEALELSKAAHRTLCAVEDDLEKLAFNRAVARLYEFLNIMAPLLNTVADLDDEMKSALRQAMDFFCAMIAPMMPHLAEECHAALGGKTLMSECAWPVYDKALIVEDSVTLPVQINGKKRGDVTVPVTADQAEIEQAVLALSFVQAQLAGKSVKKMIIVPKRIVNVVL.

A 'HIGH' region motif is present at residues P43–H53. The 'KMSKS' region signature appears at K633–S637. K636 provides a ligand contact to ATP.

The protein belongs to the class-I aminoacyl-tRNA synthetase family.

Its subcellular location is the cytoplasm. It catalyses the reaction tRNA(Leu) + L-leucine + ATP = L-leucyl-tRNA(Leu) + AMP + diphosphate. The protein is Leucine--tRNA ligase of Bartonella bacilliformis (strain ATCC 35685 / KC583 / Herrer 020/F12,63).